The primary structure comprises 1285 residues: Ataxin-2 (1285 aa).

3 disordered regions span residues 1–85 (MRSS…PGSR), 111–178 (ARAC…SPGA), and 197–224 (PVAS…GLPQ). Positions 29 to 38 (SLPRTARRGG) are enriched in basic residues. The segment covering 48–65 (AGPPPRGPGAPPRGPRSP) has biased composition (pro residues). Residues 128-144 (SSSARPAPGCPRPACEP) show a composition bias toward low complexity. A compositionally biased stretch (gly residues) spans 205–214 (AGGGRPGLGR). A phosphoserine mark is found at S218 and S219. Residues 237 to 314 (RMVHILTSVV…FVVVQFKDTD (78 aa)) enclose the Sm domain. S362 and S435 each carry phosphoserine. Basic and acidic residues-rich tracts occupy residues 428–440 (ALEN…EEKY) and 447–461 (CSDR…RDNK). 2 disordered regions span residues 428 to 925 (ALEN…HQQP) and 1111 to 1191 (AALH…QSSF). S477 carries the phosphoserine modification. Over residues 498-510 (ASHTSDFNPNAGS) the composition is skewed to polar residues. S523 bears the Phosphoserine mark. Over residues 526–552 (PSHSSRPPSRYQSGPNSLPPRAATHTR) the composition is skewed to low complexity. The span at 554-567 (PSRPPSRPSRPPSH) shows a compositional bias: pro residues. S593 is modified (phosphoserine). Positions 596 to 606 (AQRHPRNHRVS) are enriched in basic residues. R609 is subject to Asymmetric dimethylarginine; alternate. The residue at position 609 (R609) is an Omega-N-methylarginine; alternate. 2 positions are modified to phosphoserine: S611 and S653. The span at 662-672 (PRQSSIGNSPS) shows a compositional bias: polar residues. Residues 685-694 (PAEAVSMPVP) are compositionally biased toward low complexity. S697 is subject to Phosphoserine. At T710 the chain carries Phosphothreonine. Positions 737-746 (ASETSPSFSK) are enriched in polar residues. S741 and S753 each carry phosphoserine. Residues 757-773 (SEHRKQIDDLKKFKNDF) show a composition bias toward basic and acidic residues. Residues 776-789 (QPSSTSESMDQLLS) show a composition bias toward polar residues. The span at 790–813 (KNREGEKSRDLIKDKTEASAKDSF) shows a compositional bias: basic and acidic residues. A compositionally biased stretch (low complexity) spans 814 to 838 (IDSSSSSSNCTSGSSKTNSPSISPS). Phosphoserine is present on residues S827, S828, S832, S836, S838, S859, and S860. Polar residues predominate over residues 851-862 (VTSQGVQTSSPA). K864 participates in a covalent cross-link: Glycyl lysine isopeptide (Lys-Gly) (interchain with G-Cter in SUMO2). Basic and acidic residues predominate over residues 864-881 (KQEKDDREEKKDTTEQVR). Composition is skewed to low complexity over residues 896–907 (SFSQPKPSTTPT) and 1128–1165 (GQQQ…QQSA).

It belongs to the ataxin-2 family. As to quaternary structure, interacts with RBFOX1. Monomer. Can also form homodimers. Interacts with polyribosomes. Interacts with EGFR. Interacts with SH3GL3. Interacts with SH3GL2, SH3KBP1 and CBL. Interacts with ATXN2L. As to expression, expressed in the heart, lung, liver, kidney, skeletal muscle, spleen and intestine. Predominant expression was seen in the brain where a high level expression was found in the pyramidal cortical neurons, large brain stem neurons and cerebellar Purkinje cells. All three isoforms were found in all the tissues except skeletal muscle where only isoform 1 was found.

Its subcellular location is the cytoplasm. In terms of biological role, involved in EGFR trafficking, acting as negative regulator of endocytic EGFR internalization at the plasma membrane. In Mus musculus (Mouse), this protein is Ataxin-2 (Atxn2).